The primary structure comprises 201 residues: Pyridoxal 5'-phosphate synthase subunit PdxT (201 aa).

G50–S52 serves as a coordination point for L-glutamine. Residue C82 is the Nucleophile of the active site. L-glutamine contacts are provided by residues R115 and I143 to R144. Residues H179 and E181 each act as charge relay system in the active site.

This sequence belongs to the glutaminase PdxT/SNO family. As to quaternary structure, in the presence of PdxS, forms a dodecamer of heterodimers. Only shows activity in the heterodimer.

It catalyses the reaction aldehydo-D-ribose 5-phosphate + D-glyceraldehyde 3-phosphate + L-glutamine = pyridoxal 5'-phosphate + L-glutamate + phosphate + 3 H2O + H(+). The catalysed reaction is L-glutamine + H2O = L-glutamate + NH4(+). It participates in cofactor biosynthesis; pyridoxal 5'-phosphate biosynthesis. Its function is as follows. Catalyzes the hydrolysis of glutamine to glutamate and ammonia as part of the biosynthesis of pyridoxal 5'-phosphate. The resulting ammonia molecule is channeled to the active site of PdxS. The chain is Pyridoxal 5'-phosphate synthase subunit PdxT from Deinococcus geothermalis (strain DSM 11300 / CIP 105573 / AG-3a).